Here is a 615-residue protein sequence, read N- to C-terminus: Proteasome-associated ATPase (615 aa).

The interval 1–36 (MSESERPEAGDGTDALGASPDTPLSSEDAAELEQLR) is disordered. The stretch at 25–102 (SSEDAAELEQ…LREEVDRLGQ (78 aa)) forms a coiled coil. Residue 302 to 307 (GCGKTL) coordinates ATP. The interval 614–615 (YL) is docks into pockets in the proteasome alpha-ring.

The protein belongs to the AAA ATPase family. As to quaternary structure, homohexamer. Assembles into a hexameric ring structure that caps the 20S proteasome core. Strongly interacts with the prokaryotic ubiquitin-like protein Pup through a hydrophobic interface; the interacting region of ARC lies in its N-terminal coiled-coil domain. There is one Pup binding site per ARC hexamer ring. Upon ATP-binding, the C-terminus of ARC interacts with the alpha-rings of the proteasome core, possibly by binding to the intersubunit pockets.

The protein operates within protein degradation; proteasomal Pup-dependent pathway. Its function is as follows. ATPase which is responsible for recognizing, binding, unfolding and translocation of pupylated proteins into the bacterial 20S proteasome core particle. May be essential for opening the gate of the 20S proteasome via an interaction with its C-terminus, thereby allowing substrate entry and access to the site of proteolysis. Thus, the C-termini of the proteasomal ATPase may function like a 'key in a lock' to induce gate opening and therefore regulate proteolysis. This chain is Proteasome-associated ATPase, found in Mycolicibacterium gilvum (strain PYR-GCK) (Mycobacterium gilvum (strain PYR-GCK)).